The sequence spans 770 residues: MMDQARSAFSTLFGGEPLSYTRFSLARQVDGDNSHVEMKLAADEEENVDNNMRGNHASVPKPKRCNGFICYGTIAVVLFFLIGFMIGYLGYCKRVEPKAGCERPTGTEALGTERTEPSETEEYFPETPSRLFWTDLKTMLSERLSNTDFTNTMRWLNENSYVPREAGSQKDESLALLIENRFREFQLSKSWRDEHFVEIQVKSSNAQNTVTIVDMESDLVYLAESPEGYVAYSKATTVTGRLVHVNFGTKKDFENLKSPVNGSLVIARAGKITFAEKVANAQSYNALGVLIYMDQARFPIVNARIPFFGHAHLGTGDPYTPGFPSFNHTQFPPSQSSGLPSIPVQTISRAAAEKLFENMEGDCPSAWEIDPSCRLETSSNKNVNLTVNNVLKEIRIFNVFGVIKGFEEPDRYVVIGAQRDAWGPGAAKSSVGTALLLELARIFSDMVLKGGFKPSRSIVFASWSAGDFGAIGATEWLEGYLSSLHLKAFTYINLDKAILGTSNFKVSASPLLYSLLEKTMKDVKHPITGQSLYRDSNWINKVEKLSLDNAAFPFLAYSGIPAVSFCFCEDTDYPYLGTTMDLYENLNQKIPQLNKMARGAAEVAGQLIMKLTYDLELNLNYEMYNDRILSFVRDMNQFRTDIKEMGLNLQWLYSARGDFFRATSRLTTDYKNAERTNRFVMREINDRIMKVEHNFLSPYVSPRDSPFRHIFWGSGSHTLPALVEHLKLRQKNKSAFNETLLRNQLALATWTIQGAANALSGDIWDIDNEF.

Residues Met1–Cys70 are Cytoplasmic-facing. The segment at Met1–Cys70 is mediates interaction with SH3BP4. Ser10 and Ser19 each carry phosphoserine. Tyr20 is subject to Phosphotyrosine. An Endocytosis signal motif is present at residues Tyr20–Phe23. Thr21 carries the post-translational modification Phosphothreonine. Phosphoserine is present on Ser24. Residues Lys61–Arg64 carry the Stop-transfer sequence motif. S-palmitoyl cysteine attachment occurs at residues Cys65 and Cys70. Residues Tyr71–Gly90 traverse the membrane as a helical; Signal-anchor for type II membrane protein segment. Over Tyr91–Phe770 the chain is Extracellular. Residues Glu102–Glu122 are disordered. An O-linked (GalNAc...) threonine glycan is attached at Thr107. Positions Ser233–Phe323 constitute a PA domain. N-linked (GlcNAc...) asparagine glycosylation is found at Asn261, Asn327, and Asn384. The tract at residues Thr579 to Phe770 is ligand-binding. A Cell attachment site motif is present at residues Arg656–Asp658. Asn732 and Asn737 each carry an N-linked (GlcNAc...) asparagine glycan.

This sequence belongs to the peptidase M28 family. M28B subfamily. Homodimer; disulfide-linked. Binds one transferrin molecule per subunit. Interacts with SH3BP4. Interacts with STEAP3; facilitates TFRC endocytosis in erythroid precursor cells. Stearoylated by ZDHHC6 which inhibits TFRC-mediated activation of the JNK pathway and promotes mitochondrial fragmentation. Stearoylation does not affect iron uptake. Post-translationally, N- and O-glycosylated, phosphorylated and palmitoylated.

It localises to the cell membrane. The protein resides in the melanosome. Cellular uptake of iron occurs via receptor-mediated endocytosis of ligand-occupied transferrin receptor into specialized endosomes. Endosomal acidification leads to iron release. The apotransferrin-receptor complex is then recycled to the cell surface with a return to neutral pH and the concomitant loss of affinity of apotransferrin for its receptor. Transferrin receptor is necessary for development of erythrocytes and the nervous system. Positively regulates T and B cell proliferation through iron uptake. Acts as a lipid sensor that regulates mitochondrial fusion by regulating activation of the JNK pathway. When dietary levels of stearate (C18:0) are low, promotes activation of the JNK pathway, resulting in HUWE1-mediated ubiquitination and subsequent degradation of the mitofusin MFN2 and inhibition of mitochondrial fusion. When dietary levels of stearate (C18:0) are high, TFRC stearoylation inhibits activation of the JNK pathway and thus degradation of the mitofusin MFN2. Mediates uptake of NICOL1 into fibroblasts where it may regulate extracellular matrix production. This is Transferrin receptor protein 1 (TFRC) from Canis lupus familiaris (Dog).